The primary structure comprises 409 residues: Salivary endonuclease (409 aa).

The N-terminal stretch at 1–20 is a signal peptide; sequence MHLQLNLCAILLSVLNGIQG. 2 N-linked (GlcNAc...) asparagine glycosylation sites follow: N37 and N102. Residue H216 is the Proton acceptor of the active site. N246 lines the Mg(2+) pocket. Residues N351 and N381 are each glycosylated (N-linked (GlcNAc...) asparagine).

It belongs to the DNA/RNA non-specific endonuclease family. The cofactor is Mg(2+). Salivary gland.

It localises to the secreted. Hydrolyzes single-stranded and double-stranded DNA with little sequence specificity. Inhibits contact pathway of blood coagulation in the host by preventing activation of coagulation factor XII (F12) triggered by soluble DNA. Modestly up-regulates expression of CSF2, CXCL1 and CXCL8 in cultured human dermal microvascular endothelial cells. At higher doses promotes host neutrophil recruitment at the injection site in mouse model. Functionally, (Microbial infection) Increases Leishmania major survival in the host by disrupting parasite-induced neutrophil extracellular traps. Exacerbates L.major parasite infectivity and increases cutaneous lesions in mouse model. The chain is Salivary endonuclease from Lutzomyia longipalpis (Sand fly).